Here is a 176-residue protein sequence, read N- to C-terminus: PRELI domain-containing protein 2 (176 aa).

The PRELI/MSF1 domain maps to 1 to 175 (MGIAVEARKV…ILRERCGCPF (175 aa)).

The chain is PRELI domain-containing protein 2 (prelid2) from Xenopus tropicalis (Western clawed frog).